Reading from the N-terminus, the 455-residue chain is Carbamoyl phosphate synthase arginine-specific small chain (455 aa).

The transit peptide at methionine 1 to methionine 28 directs the protein to the mitochondrion. Residues histidine 219–asparagine 406 form the Glutamine amidotransferase type-1 domain. The active-site Nucleophile is the cysteine 295. Catalysis depends on residues histidine 379 and glutamate 381.

This sequence belongs to the CarA family. Heterodimer composed of 2 chains; the small (or glutamine) chain promotes the hydrolysis of glutamine to ammonia, which is used by the large (or ammonia) chain to synthesize carbamoyl phosphate.

The protein localises to the mitochondrion matrix. It catalyses the reaction hydrogencarbonate + L-glutamine + 2 ATP + H2O = carbamoyl phosphate + L-glutamate + 2 ADP + phosphate + 2 H(+). It carries out the reaction L-glutamine + H2O = L-glutamate + NH4(+). It functions in the pathway amino-acid biosynthesis; L-arginine biosynthesis; carbamoyl phosphate from bicarbonate: step 1/1. In terms of biological role, small subunit of the arginine-specific carbamoyl phosphate synthase (CPSase). CPSase catalyzes the formation of carbamoyl phosphate from the ammonia moiety of glutamine, carbonate, and phosphate donated by ATP, the first step of the arginine biosynthetic pathway. The small subunit (glutamine amidotransferase) binds and cleaves glutamine to supply the large subunit with the substrate ammonia. This is Carbamoyl phosphate synthase arginine-specific small chain (cpa1) from Aspergillus clavatus (strain ATCC 1007 / CBS 513.65 / DSM 816 / NCTC 3887 / NRRL 1 / QM 1276 / 107).